We begin with the raw amino-acid sequence, 336 residues long: dTDP-glucose 4,6-dehydratase (336 aa).

NAD(+) contacts are provided by residues 7-13 (GGAGFIG), 37-40 (DKLT), and 63-64 (DI). Threonine 87 serves as a coordination point for substrate. Position 102 (threonine 102) interacts with NAD(+). Residue 127-129 (TDE) coordinates substrate. The active-site Proton donor is the aspartate 128. Active-site proton acceptor residues include glutamate 129 and tyrosine 151. 151 to 155 (YAAAK) provides a ligand contact to NAD(+). Residue asparagine 180 participates in substrate binding. Asparagine 181 is an NAD(+) binding site. Residues 190-191 (KL), 206-208 (PVY), arginine 215, asparagine 250, and 274-277 (RPGH) each bind substrate.

It belongs to the NAD(P)-dependent epimerase/dehydratase family. dTDP-glucose dehydratase subfamily. Homodimer. Requires NAD(+) as cofactor.

It carries out the reaction dTDP-alpha-D-glucose = dTDP-4-dehydro-6-deoxy-alpha-D-glucose + H2O. Its pathway is antibiotic biosynthesis; novobiocin biosynthesis. Its function is as follows. dTDP-glucose 4,6-dehydratase involved in the generation of the deoxysugar in the novobiocin biosynthesis pathway, an aminocoumarin family antibiotic that targets bacterial DNA gyrases. In Streptomyces niveus (Streptomyces spheroides), this protein is dTDP-glucose 4,6-dehydratase (novT).